Consider the following 413-residue polypeptide: Serine protease inhibitor A3L (413 aa).

A signal peptide spans 1-28 (MAFIAALGLLMAGICPAVLCDGTLGRDT). Ser30 carries the phosphoserine modification. 4 N-linked (GlcNAc...) asparagine glycosylation sites follow: Asn102, Asn182, Asn220, and Asn267. Residues 365 to 389 (GTEATAATGVATVIRRQPRTLNFNR) form an RCL region.

It belongs to the serpin family. N-glycosylated. As to expression, liver.

Its subcellular location is the secreted. This Rattus norvegicus (Rat) protein is Serine protease inhibitor A3L (Serpina3l).